The sequence spans 364 residues: D-alanine--D-alanine ligase (364 aa).

The 206-residue stretch at 141-346 (KNLFAQAGLR…YSELIERLIA (206 aa)) folds into the ATP-grasp domain. An ATP-binding site is contributed by 174–229 (EQELGYPCFVKPANAGSSVGISKCKQRDDLKTAFAEAFKYDRKIIIEESIVGREIE). Positions 300, 313, and 315 each coordinate Mg(2+).

Belongs to the D-alanine--D-alanine ligase family. Mg(2+) serves as cofactor. The cofactor is Mn(2+).

The protein localises to the cytoplasm. It catalyses the reaction 2 D-alanine + ATP = D-alanyl-D-alanine + ADP + phosphate + H(+). Its pathway is cell wall biogenesis; peptidoglycan biosynthesis. In terms of biological role, cell wall formation. In Geobacillus thermodenitrificans (strain NG80-2), this protein is D-alanine--D-alanine ligase.